The primary structure comprises 187 residues: ATP synthase subunit b 2 (187 aa).

Residues 1–13 show a composition bias toward polar residues; sequence MAESHATGTTTHT. Residues 1–21 form a disordered region; sequence MAESHATGTTTHTEVPHGKPE. The chain crosses the membrane as a helical span at residues 31-53; it reads ASQLVSFAIAFALLYVIVSRFAL.

The protein belongs to the ATPase B chain family. As to quaternary structure, F-type ATPases have 2 components, F(1) - the catalytic core - and F(0) - the membrane proton channel. F(1) has five subunits: alpha(3), beta(3), gamma(1), delta(1), epsilon(1). F(0) has three main subunits: a(1), b(2) and c(10-14). The alpha and beta chains form an alternating ring which encloses part of the gamma chain. F(1) is attached to F(0) by a central stalk formed by the gamma and epsilon chains, while a peripheral stalk is formed by the delta and b chains.

Its subcellular location is the cell inner membrane. Its function is as follows. F(1)F(0) ATP synthase produces ATP from ADP in the presence of a proton or sodium gradient. F-type ATPases consist of two structural domains, F(1) containing the extramembraneous catalytic core and F(0) containing the membrane proton channel, linked together by a central stalk and a peripheral stalk. During catalysis, ATP synthesis in the catalytic domain of F(1) is coupled via a rotary mechanism of the central stalk subunits to proton translocation. Functionally, component of the F(0) channel, it forms part of the peripheral stalk, linking F(1) to F(0). The b'-subunit is a diverged and duplicated form of b found in plants and photosynthetic bacteria. This chain is ATP synthase subunit b 2 (atpF2), found in Afipia carboxidovorans (strain ATCC 49405 / DSM 1227 / KCTC 32145 / OM5) (Oligotropha carboxidovorans).